A 523-amino-acid polypeptide reads, in one-letter code: 2-isopropylmalate synthase (523 aa).

The Pyruvate carboxyltransferase domain maps to 5-267 (VIIFDTTLRD…ETGINAKEIH (263 aa)). Positions 14, 202, 204, and 238 each coordinate Mn(2+). The regulatory domain stretch occupies residues 392 to 523 (GLQQLVVHSD…KQARTELGGV (132 aa)).

This sequence belongs to the alpha-IPM synthase/homocitrate synthase family. LeuA type 1 subfamily. In terms of assembly, homodimer. The cofactor is Mn(2+).

The protein localises to the cytoplasm. It carries out the reaction 3-methyl-2-oxobutanoate + acetyl-CoA + H2O = (2S)-2-isopropylmalate + CoA + H(+). It functions in the pathway amino-acid biosynthesis; L-leucine biosynthesis; L-leucine from 3-methyl-2-oxobutanoate: step 1/4. Its function is as follows. Catalyzes the condensation of the acetyl group of acetyl-CoA with 3-methyl-2-oxobutanoate (2-ketoisovalerate) to form 3-carboxy-3-hydroxy-4-methylpentanoate (2-isopropylmalate). In Shewanella loihica (strain ATCC BAA-1088 / PV-4), this protein is 2-isopropylmalate synthase.